We begin with the raw amino-acid sequence, 704 residues long: ATP-dependent zinc metalloprotease FtsH (704 aa).

The Cytoplasmic segment spans residues 1–17; the sequence is MADSAKTPRGKKRRPFT. The chain crosses the membrane as a helical span at residues 18–38; sequence GLALWIIVALLLGMAMFSLFG. The Extracellular segment spans residues 39–127; the sequence is RDGYQQIDTQ…DEIASSSWWS (89 aa). A helical membrane pass occupies residues 128-148; it reads TLLLSFLPLLIFIGLFWFLIM. The Cytoplasmic segment spans residues 149 to 704; the sequence is NAQGGGKAMQ…GSAGTDGTGR (556 aa). ATP is bound at residue 217 to 224; it reads GPPGTGKT. His439 is a Zn(2+) binding site. Glu440 is an active-site residue. Residues His443 and Asp515 each coordinate Zn(2+). The tract at residues 624–704 is disordered; the sequence is PREVWISSTE…GSAGTDGTGR (81 aa). Over residues 681–704 the composition is skewed to gly residues; sequence PHGGEPGGGGYGYDGSAGTDGTGR.

It in the central section; belongs to the AAA ATPase family. This sequence in the C-terminal section; belongs to the peptidase M41 family. As to quaternary structure, homohexamer. The cofactor is Zn(2+).

It localises to the cell membrane. Its function is as follows. Acts as a processive, ATP-dependent zinc metallopeptidase for both cytoplasmic and membrane proteins. Plays a role in the quality control of integral membrane proteins. The chain is ATP-dependent zinc metalloprotease FtsH from Brachybacterium faecium (strain ATCC 43885 / DSM 4810 / JCM 11609 / LMG 19847 / NBRC 14762 / NCIMB 9860 / 6-10).